The sequence spans 278 residues: Insulin-like growth factor-binding protein-like 1 (278 aa).

A signal peptide spans 1 to 25; that stretch reads MPRLSLLLPLLLLLLLPLLPPLSPS. One can recognise an IGFBP N-terminal domain in the interval 34–109; that stretch reads RRPKCGPCRP…PEGTGLCVCA (76 aa). 7 disulfides stabilise this stretch: cysteine 38–cysteine 63, cysteine 41–cysteine 65, cysteine 46–cysteine 66, cysteine 52–cysteine 69, cysteine 77–cysteine 91, cysteine 85–cysteine 106, and cysteine 115–cysteine 151. One can recognise a Kazal-like domain in the interval 95–153; that stretch reads AAGAAPEGTGLCVCAQRGTVCGSDGRSYPSVCALRLRARHTPRAHPGHLHKARDGPCEF. Residues 155–259 enclose the Ig-like C2-type domain; it reads PVVVVPPRSV…GEAESHSTVT (105 aa). An N-linked (GlcNAc...) asparagine glycan is attached at asparagine 166. A disulfide bridge links cysteine 176 with cysteine 243.

As to expression, expressed at the highest level in both brain and testis, with lower levels in the prostate, bladder and lung.

Its subcellular location is the secreted. Functionally, IGF-binding proteins prolong the half-life of IGFs and have been shown to either inhibit or stimulate the growth promoting effects of the IGFs in cell culture. They alter the interaction of IGFs with their cell surface receptors. May be a putative tumor suppressor protein. The sequence is that of Insulin-like growth factor-binding protein-like 1 (IGFBPL1) from Homo sapiens (Human).